Reading from the N-terminus, the 1486-residue chain is MILRRLLLAGSLLLASFATAKKDGPKIEVTELEHEPKHLFYFEDSDVVMLQHKYDAYISTDAGVSWAPVKGPDDHMKGKVKAIYHHPYDRTKAYVLGQERTHWTTDDTGKSWREFTIDQALPRSGNPLSFHGKDSNKVILHTIECSGFICQMPALYTTDGFKSHKILTKAQHGCSWAISTPEFAAREEFPENVDNRILCMFTGLHSPIGTQKRLLYSDDFFEGDRGTEVPLNNGRPVSDIVSMVGVKKFLVAAARSPRTNELALYVSDDASRWHQALFDGHRLENNGYTILESTNYSIQVGVKTSGGFNPMSALFTSNSDGVSFTRNAEHLNANNLGYVDFEKIAGIQGIFLVNTVTNWEEIEEHHGGKKKIVSKISFDDGRTFHDIKAGDKNLHLHSVTHIHNTGRVFSSPAPGLVMGVGNVGDSLKEYDDGDLYVSDNAGITWWRALEDAHKYEFGDQGSVLVAVYDEGRTNKISYSLNHGKDWKTAELPVKIRARTLTTTPDSTSLKFLLLGTGKGSSERKHYVIALDFSDVHERKCSKDDFERWPARLNEKEEPDCLMGHKQFYRRRKGKSECFIGEEFKDPVPELERCKCTEEDFECDFNFVRSEDRKDCVPARSLPVPEGQCKKPEDKYTGSSGFRLIPGDDCIKEGGLELDKPKERSCSDTAKEPVSGEIGVSIQHFDANKPAEYYYMERPTLSKDKDETVMLLTDKLEVFMTKDHGKTWQQILAGKNIAKLWPHTYNNDIMYYVTGEKKVFLTKNRGDSFREFETKLPPNRDRLPVLAFHPDPERSEWLIWTGADNCERGGDCHSVAHYSTDGGDEWHTLMRYVGRCEFVGKGGVRKTDELIFCAQHENEDPKNKHFRLLSSENWFTNKKIHYKDILDFRTMAEFIIVAARAGKDSLKVGASIDGDTFADAEFPPNFDVKTQQAYTVLDSSTHSVWLHVTVHNVPDHQFGSIIKSNSNGTSYVLSLSNVNRNNADYVDFEKMQGLEGVALVNVVANVDEVVKGAAKKLRTMITHNDGAEWDYVRPPAMDADGRKYGCSPGKKGTAECGLHLHSYTERRDFRDTFSSPSAVGLMLAVGNVGDHLTLKSEGDTFITRDGGIEWHSVKKGNYIWEYGDQGSIIVIVPESKPTKTIFYTLDEGRTWIEFEFTKVEMQISDITTVPSDTSRNFLLWGTEVGSGAKPGFATVNLDFSGLKERSKKCVLKEEKPEADDYYIWEPKHPLLEDNCLFGHVARYHRKKPDSQCFNGGEFEKLHNVSTNCPCTRQDYECDYNYERQSDGSCALVEGLQPLDPKRICTEDPNAIEYYEPTGYRRIPLTTCEHGVKLDGFKAFPCPNKEKEFEKKHPGLRGVGLFFAIVIPIAAAAAVGYWVYNRWDGKFGRIRLGETSRSGSWLSRDSPLVVVPVAIIAGTVAVMSALPLLAASLWRSFRGWMPVGRGSSRPYSSRGAFAARRGDYVGVVEDEDELLGAEDFDGDEDEEV.

A signal peptide spans Met-1–Ala-20. Residues Lys-21–Gly-1356 lie on the Lumenal side of the membrane. The stretch at Tyr-57 to Trp-66 is one BNR 1 repeat. The N-linked (GlcNAc...) asparagine glycan is linked to Asn-295. BNR repeat units follow at residues Ile-376–His-385, Tyr-436–Trp-445, Tyr-478–Lys-487, Phe-718–Gln-728, and Tyr-817–His-826. N-linked (GlcNAc...) asparagine glycosylation is present at Asn-966. BNR repeat units follow at residues Phe-1100 to His-1110 and Phe-1141 to Trp-1150. Asn-1262 carries an N-linked (GlcNAc...) asparagine glycan. The helical transmembrane segment at Val-1357–Val-1377 threads the bilayer. At Tyr-1378–Pro-1405 the chain is on the cytoplasmic side. The chain crosses the membrane as a helical span at residues Leu-1406–Leu-1426. Residues Leu-1427 to Val-1486 are Lumenal-facing.

The protein belongs to the VPS10-related sortilin family.

The protein localises to the golgi apparatus. It is found in the trans-Golgi network membrane. The protein resides in the prevacuolar compartment membrane. Its function is as follows. Functions as a sorting receptor in the Golgi compartment required for the intracellular sorting and delivery of soluble vacuolar proteins, like carboxypeptidase Y (CPY) and proteinase A. Executes multiple rounds of sorting by cycling between the late Golgi and a prevacuolar endosome-like compartment. The protein is Vacuolar protein sorting/targeting protein 10 (VPS10) of Coccidioides posadasii (strain C735) (Valley fever fungus).